Consider the following 189-residue polypeptide: T cell receptor gamma constant 2 (189 aa).

In terms of domain architecture, Ig-like spans 10–104 (PKPTIFLPSI…NKNGIDQEII (95 aa)). The cysteines at positions 32 and 88 are disulfide-linked. Asparagine 66, asparagine 120, asparagine 136, asparagine 142, and asparagine 151 each carry an N-linked (GlcNAc...) asparagine glycan. A helical transmembrane segment spans residues 155 to 177 (YYTYLLLLLKSVVYFAIITCCLL).

Gamma-delta TR is a heterodimer composed of a gamma and delta chain; disulfide-linked. The gamma-delta TR is associated with the transmembrane signaling CD3 coreceptor proteins following the stoichiometry: a single gamma-delta TR heterodimer associates with one CD3D-CD3E heterodimer, one CD3G-CD3E heterodimer and one CD247 homodimer forming a stable octameric structure. Upon activation, gamma-delta TR complex associates with FCER1G to initiate intracellular signaling.

It localises to the cell membrane. Constant region of T cell receptor (TR) gamma chain that participates in the antigen recognition. Gamma-delta TRs recognize a variety of self and foreign non-peptide antigens frequently expressed at the epithelial boundaries between the host and external environment, including endogenous lipids presented by MH-like protein CD1D and phosphoantigens presented by butyrophilin-like molecule BTN3A1. Upon antigen recognition induces rapid, innate-like immune responses involved in pathogen clearance and tissue repair. Binding of gamma-delta TR complex to antigen triggers phosphorylation of immunoreceptor tyrosine-based activation motifs (ITAMs) in the CD3 chains by the LCK and FYN kinases, allowing the recruitment, phosphorylation, and activation of ZAP70 that facilitates phosphorylation of the scaffolding proteins LCP2 and LAT. This lead to the formation of a supramolecular signalosome that recruits the phospholipase PLCG1, resulting in calcium mobilization and ERK activation, ultimately leading to T cell expansion and differentiation into effector cells. Gamma-delta TRs are produced through somatic rearrangement of a limited repertoire of variable (V), diversity (D), and joining (J) genes. The potential diversity of gamma-delta TRs is conferred by the unique ability to rearrange (D) genes in tandem and to utilize all three reading frames. The combinatorial diversity is considerably increased by the sequence exonuclease trimming and random nucleotide (N) region additions which occur during the V-(D)-J rearrangements. This chain is T cell receptor gamma constant 2, found in Homo sapiens (Human).